The primary structure comprises 326 residues: MFISISAGIVTFLLTLVGIPAFIQFYRKAQITGQQMHEDVKQHQAKAGTPTMGGLVFLIASVLVAFFFALFSNQLSNNVGMILFILVLYGLIGFLDDFLKVFRKINEGLNPKQKLALQLLGGVIFYLFYERGGDILSVFGYPVHLGFFYIFFALFWLVGFSNAVNLTDGVDGLASISVVISLSAYGVIAYVQGQMDILLVILAMIGGLLGFFIFNHKPAKVFMGDVGSLALGGMLAAISMALHQEWTLLIIGIVYVFETTSVMMQVSYFKLTGGKRIFRMTPVHHHFELGGLSGKGNPWSEWKVDFFFWGVGLLASLLTLAILYLM.

Helical transmembrane passes span 3 to 23 (ISIS…PAFI), 51 to 71 (TMGG…FALF), 79 to 99 (VGMI…DDFL), 115 to 135 (LALQ…GGDI), 138 to 158 (VFGY…FWLV), 169 to 189 (GVDG…GVIA), 195 to 215 (MDIL…FIFN), 221 to 243 (VFMG…MALH), and 306 to 326 (FFFW…LYLM).

Belongs to the glycosyltransferase 4 family. MraY subfamily. It depends on Mg(2+) as a cofactor.

Its subcellular location is the cell membrane. It carries out the reaction UDP-N-acetyl-alpha-D-muramoyl-L-alanyl-gamma-D-glutamyl-L-lysyl-D-alanyl-D-alanine + di-trans,octa-cis-undecaprenyl phosphate = Mur2Ac(oyl-L-Ala-gamma-D-Glu-L-Lys-D-Ala-D-Ala)-di-trans,octa-cis-undecaprenyl diphosphate + UMP. The protein operates within cell wall biogenesis; peptidoglycan biosynthesis. Catalyzes the initial step of the lipid cycle reactions in the biosynthesis of the cell wall peptidoglycan: transfers peptidoglycan precursor phospho-MurNAc-pentapeptide from UDP-MurNAc-pentapeptide onto the lipid carrier undecaprenyl phosphate, yielding undecaprenyl-pyrophosphoryl-MurNAc-pentapeptide, known as lipid I. The chain is Phospho-N-acetylmuramoyl-pentapeptide-transferase from Streptococcus pneumoniae serotype 19F (strain G54).